The sequence spans 478 residues: MARKTLRARRFFSLIFPFFFITSVYAEQTPVSAKTVTVEAKNETFAPQHPDQYQSWKATSEQSAREDALAEDPRLVILWAGYPFSRDYNKPRGHAYAVTDVRETLRTGAPKTAEDGPLPMACWSCKSPDVARLIQQEGEDGYFHGKWARGGPEIVNDLGCADCHNTASDDFAQGKPALTLSRPYAERAMEAIGKPFDKAGRFDQQSMVCGQCHVEYYFDGKNKAVKFPWDEGMKVENMEQYYDAIAFSDWTNSLSKTPMLKAQHPEYETWSAGIHGKNNVTCIDCHMPKVQNAEGKLYTDHKIGNPFDNFAQTCANCHTQDKASLQKVVAERKQAIHDLKIKVEDQLVHAHFEAKAAWDAGATDAEMKPILNDIRHAQWRWDLAIASHGIHMHAPEEGLRMLGSAMDKAADARTKLARLLATKGITHEIPLPDISTKEKAQKAIGLNMQQINAEKQDFLKTVVPQWEDQARKNGLLSQ.

Residues 1–26 (MARKTLRARRFFSLIFPFFFITSVYA) form the signal peptide. Position 94 (H94) interacts with heme c. Positions 122, 125, and 126 each coordinate heme. Residues C160, C163, H164, C209, C212, and H213 each coordinate heme c. E215, Y216, K261, and Q263 together coordinate Ca(2+). Y216 serves as a coordination point for substrate. H264 is a binding site for substrate. 9 residues coordinate heme c: H275, C282, C285, H286, H301, C314, C317, H318, and H393.

Belongs to the cytochrome c-552 family. Ca(2+) serves as cofactor. Requires heme c as cofactor.

Its subcellular location is the periplasm. The catalysed reaction is 6 Fe(III)-[cytochrome c] + NH4(+) + 2 H2O = 6 Fe(II)-[cytochrome c] + nitrite + 8 H(+). It functions in the pathway nitrogen metabolism; nitrate reduction (assimilation). Functionally, catalyzes the reduction of nitrite to ammonia, consuming six electrons in the process. The polypeptide is Cytochrome c-552 (Salmonella schwarzengrund (strain CVM19633)).